We begin with the raw amino-acid sequence, 1302 residues long: Vascular endothelial growth factor receptor kdr-like (1302 aa).

An N-terminal signal peptide occupies residues 1–28 (MTPLKTSVKAFFTLHVLFSCISHGLVEG). At 29–740 (SRLPDPQLLP…GEDGKPNIEV (712 aa)) the chain is on the extracellular side. Ig-like C2-type domains follow at residues 34-115 (PQLL…HEVS), 143-206 (DPYF…VDNA), 222-318 (KNLA…TKVI), 326-412 (NVTH…ISYK), 419-542 (PKIF…FYVD), 545-636 (PQPF…SALT), and 643-728 (PWLM…AVIT). Disulfide bonds link Cys-55-Cys-104 and Cys-150-Cys-199. Asn-69 and Asn-97 each carry an N-linked (GlcNAc...) asparagine glycan. N-linked (GlcNAc...) asparagine glycosylation is found at Asn-242, Asn-265, Asn-291, Asn-326, Asn-370, Asn-380, Asn-408, Asn-453, Asn-466, Asn-505, Asn-517, Asn-532, Asn-607, Asn-611, Asn-630, Asn-648, and Asn-655. Cys-243 and Cys-302 are oxidised to a cystine. A disulfide bridge connects residues Cys-444 and Cys-524. Cys-565 and Cys-618 are joined by a disulfide. Cys-664 and Cys-712 are disulfide-bonded. A helical membrane pass occupies residues 741 to 761 (IILVSTGAAATFLWIMLILFI). The Cytoplasmic portion of the chain corresponds to 762 to 1302 (RKLRKPSSAD…YVVRYSTPPV (541 aa)). Residues 809-1139 (LRLGKTLGHG…ELVERLGDLL (331 aa)) enclose the Protein kinase domain. Residues 815 to 823 (LGHGAFGKV) and Lys-843 contribute to the ATP site. The Proton acceptor role is filled by Asp-1003. Phosphotyrosine; by autocatalysis is present on residues Tyr-1029, Tyr-1034, and Tyr-1150. Disordered stretches follow at residues 1159–1179 (TKAD…PVSL) and 1266–1292 (PLVP…PDYN). Over residues 1162–1176 (DPSNQSPTEETSTRP) the composition is skewed to polar residues.

This sequence belongs to the protein kinase superfamily. Tyr protein kinase family. CSF-1/PDGF receptor subfamily. In terms of assembly, interacts with isoform VEGF165 of vegfaa and isoform VEGF171 of vegfab. Phosphorylated and activated by vegfaa and vegfab. First expressed in embryos between 5- and 7-somites. At 7 somites, expressed in discrete bilateral stripes both anteriorly and posteriorly, and in a transverse ectodermal stripe in the hindbrain. From 7-somites, expression seems to extend caudally from the head, and in both directions in the trunk region, until by 20-somites, expression is detected as a continuous band from the anterior head region to the tailbud. Concurrently, cells expressing kdrl in the mid- and posterior trunk regions converge medially. By 24 hours post-fertilization (hpf), expressed in all the endothelial cells lining the vasculature.

The protein localises to the cell membrane. It catalyses the reaction L-tyrosyl-[protein] + ATP = O-phospho-L-tyrosyl-[protein] + ADP + H(+). Functionally, receptor for VEGF or VEGFC. Has a tyrosine-protein kinase activity. Combinations of multiple VEGF receptors are required for development of different blood vessel types in the embryo. Involved in angiogenesis, specifically in VEGF-induced sprouting of new blood vessels. Particularly involved in artery formation. Does not appear to be required for hematopoiesis. This is Vascular endothelial growth factor receptor kdr-like (kdrl) from Danio rerio (Zebrafish).